A 474-amino-acid polypeptide reads, in one-letter code: E3 ubiquitin-protein ligase rnf168 (474 aa).

Over residues 1–12 (MPPVSEVDRGPV) the composition is skewed to basic and acidic residues. Positions 1 to 20 (MPPVSEVDRGPVEESSGGLK) are disordered. The RING-type zinc-finger motif lies at 26–65 (CPVCLEIFLEPVTLPCMHTFCKPCFLETVDKSNMCCPLCR). The LR motif 1 motif lies at 119–137 (VCQPGELRKEYEDQISKLV). The UMI motif signature appears at 152-160 (EEYIQRLLA). Positions 174–195 (EEQQLENDEKLARLLSLELNSG) match the MIU motif 1 motif. Residues 192–203 (LNSGPASESTCN) show a composition bias toward polar residues. Disordered stretches follow at residues 192 to 259 (LNSG…KPLS) and 367 to 474 (IQKE…NMGS). Residues 233–243 (PSSSDSSPDSS) are compositionally biased toward low complexity. The MIU motif 2 motif lies at 353 to 376 (RWQQEEEDRRLALRIQKELDRENS). Residues 367-383 (IQKELDRENSVDRRKGS) are compositionally biased toward basic and acidic residues. An LR motif 2 motif is present at residues 379-390 (RRKGSADSYQLR). Polar residues-rich tracts occupy residues 385–402 (DSYQ…TTSP) and 409–418 (KGSNTTTAKN). The span at 422-432 (RRGEEKTEKRL) shows a compositional bias: basic and acidic residues. The span at 443–457 (VKTPVSSTAVSSTVK) shows a compositional bias: low complexity.

This sequence belongs to the RNF168 family. In terms of assembly, monomer.

It is found in the nucleus. The enzyme catalyses S-ubiquitinyl-[E2 ubiquitin-conjugating enzyme]-L-cysteine + [acceptor protein]-L-lysine = [E2 ubiquitin-conjugating enzyme]-L-cysteine + N(6)-ubiquitinyl-[acceptor protein]-L-lysine.. It participates in protein modification; protein ubiquitination. In terms of biological role, E3 ubiquitin-protein ligase required for accumulation of repair proteins to sites of DNA damage. Acts with ube2n/ubc13 to amplify the rnf8-dependent histone ubiquitination. Recruited to sites of DNA damage at double-strand breaks (DSBs) by binding to ubiquitinated histone H2A and ubiquitinates histone H2A and H2AX, leading to amplify the rnf8-dependent H2A ubiquitination and promoting the formation of 'Lys-63'-linked ubiquitin conjugates. This leads to concentrate ubiquitinated histones H2A and H2AX at DNA lesions. Catalyzes monoubiquitination of 'Lys-13' and 'Lys-15' of nucleosomal histone H2A (H2AK13Ub and H2AK15Ub, respectively). This Danio rerio (Zebrafish) protein is E3 ubiquitin-protein ligase rnf168.